A 122-amino-acid chain; its full sequence is Large ribosomal subunit protein bL12 (122 aa).

It belongs to the bacterial ribosomal protein bL12 family. As to quaternary structure, homodimer. Part of the ribosomal stalk of the 50S ribosomal subunit. Forms a multimeric L10(L12)X complex, where L10 forms an elongated spine to which 2 to 4 L12 dimers bind in a sequential fashion. Binds GTP-bound translation factors.

Forms part of the ribosomal stalk which helps the ribosome interact with GTP-bound translation factors. Is thus essential for accurate translation. This Bdellovibrio bacteriovorus (strain ATCC 15356 / DSM 50701 / NCIMB 9529 / HD100) protein is Large ribosomal subunit protein bL12.